We begin with the raw amino-acid sequence, 333 residues long: G-protein coupled receptor 146 (333 aa).

The Extracellular portion of the chain corresponds to 1 to 21 (MWSCEDLNYTNSGEEQYLCNE). Residue Asn8 is glycosylated (N-linked (GlcNAc...) asparagine). Residues 22 to 42 (FHLFLFIFSVLYLIICFPVGL) traverse the membrane as a helical segment. Over 43 to 65 (CYNVQLVLVNLYNKATMTMPDVY) the chain is Cytoplasmic. A helical membrane pass occupies residues 66–86 (FVNMAIAGLIINAVAPVYLFG). At 87–102 (PAYTKWSLWSFGNEVY) the chain is on the extracellular side. A helical transmembrane segment spans residues 103 to 123 (ITLLILFNVSSLVIMYSTTLL). At 124 to 146 (SLDYYIECALPRTYMSSVYNTKH) the chain is on the cytoplasmic side. Residues 147 to 167 (VCGFIWGGAVLTSFSSLLFYI) form a helical membrane-spanning segment. The Extracellular segment spans residues 168-189 (CNHVSTKIIECSKMQNREAADA). A helical transmembrane segment spans residues 190 to 210 (IMVLIGYVVPIIAVIYALVLI). Topologically, residues 211–234 (LQIRKEATPLDQESGRLDPSVHRL) are cytoplasmic. The chain crosses the membrane as a helical span at residues 235 to 255 (LIATVCTQFILWTPYYVTLLV). At 256-275 (NTFMDARVKSSNTFYIRIFQ) the chain is on the extracellular side. The helical transmembrane segment at 276–296 (FTEGLSNFLAFSSSFVLPLIH) threads the bilayer. Residues 297–333 (RHINKNFSGKLQRLLKRLHCGSQGCTHEHTVVQQVMT) lie on the Cytoplasmic side of the membrane.

Belongs to the G-protein coupled receptor 1 family.

Its subcellular location is the cell membrane. In terms of biological role, G-protein coupled receptor required for the regulation of plasma cholesterol levels. This Xenopus laevis (African clawed frog) protein is G-protein coupled receptor 146 (gpr146).